A 311-amino-acid chain; its full sequence is Nudix hydrolase 9 (311 aa).

One can recognise a Nudix hydrolase domain in the interval 131-298; the sequence is SSPLGNGAVI…GFALYELMLQ (168 aa). Residues 192–213 carry the Nudix box motif; the sequence is LNKKVTQEMFDSIICEVVEETG. Glu207 and Glu211 together coordinate Mg(2+).

Belongs to the Nudix hydrolase family. The cofactor is Mg(2+). Mn(2+) serves as cofactor. As to expression, expressed in roots, stems and leaves.

Its function is as follows. Probably mediates the hydrolysis of some nucleoside diphosphate derivatives. The polypeptide is Nudix hydrolase 9 (NUDT9) (Arabidopsis thaliana (Mouse-ear cress)).